The chain runs to 119 residues: Large ribosomal subunit protein bL20 (119 aa).

The protein belongs to the bacterial ribosomal protein bL20 family.

In terms of biological role, binds directly to 23S ribosomal RNA and is necessary for the in vitro assembly process of the 50S ribosomal subunit. It is not involved in the protein synthesizing functions of that subunit. This chain is Large ribosomal subunit protein bL20, found in Acinetobacter baylyi (strain ATCC 33305 / BD413 / ADP1).